The chain runs to 81 residues: Exodeoxyribonuclease 7 small subunit (81 aa).

It belongs to the XseB family. In terms of assembly, heterooligomer composed of large and small subunits.

The protein resides in the cytoplasm. The catalysed reaction is Exonucleolytic cleavage in either 5'- to 3'- or 3'- to 5'-direction to yield nucleoside 5'-phosphates.. Its function is as follows. Bidirectionally degrades single-stranded DNA into large acid-insoluble oligonucleotides, which are then degraded further into small acid-soluble oligonucleotides. This chain is Exodeoxyribonuclease 7 small subunit, found in Ruegeria sp. (strain TM1040) (Silicibacter sp.).